The primary structure comprises 179 residues: MAKLHDYYRDQVVNELKAKFNYSSVMQVPRIEKITLNMGVGEALTDKKLLDNAVADLTAISGQKPLITKARKSVAGFKIRQGYPIGCKVTLRGERMWEFFERLITIAVPRIRDFRGLNAKSFDGRGNYSMGVREQIIFPEIDYDKVDRVRGLDITITTTAKSDEEGQALLAAFNFPFRK.

This sequence belongs to the universal ribosomal protein uL5 family. As to quaternary structure, part of the 50S ribosomal subunit; part of the 5S rRNA/L5/L18/L25 subcomplex. Contacts the 5S rRNA and the P site tRNA. Forms a bridge to the 30S subunit in the 70S ribosome.

Its function is as follows. This is one of the proteins that bind and probably mediate the attachment of the 5S RNA into the large ribosomal subunit, where it forms part of the central protuberance. In the 70S ribosome it contacts protein S13 of the 30S subunit (bridge B1b), connecting the 2 subunits; this bridge is implicated in subunit movement. Contacts the P site tRNA; the 5S rRNA and some of its associated proteins might help stabilize positioning of ribosome-bound tRNAs. This chain is Large ribosomal subunit protein uL5, found in Actinobacillus pleuropneumoniae serotype 5b (strain L20).